We begin with the raw amino-acid sequence, 248 residues long: MSPFLSLPLLLLSVLSASYSETVTSEDAQKTCPTVIACSSPGINGFPGKDGRDGTKGEKGEPGQGLRGLQGPPGKLGPPGNPGPSGSPGAKGQKGDPGASPDGDSSLAASERKALQTEMARIKKWVTFSLGKQVGKKLFLSNGETMTFDKVKALCAQFQASVATPMNQAENTVIQNLVKEEAFLGITDEETEGQFVDLTGRRLTYTNWNQGEPNNADSREDCVVLLRSGGWNDVPCSSSHLAICEFPV.

A signal peptide spans 1–20; sequence MSPFLSLPLLLLSVLSASYS. Positions 36 to 112 are disordered; that stretch reads IACSSPGING…GDSSLAASER (77 aa). The Collagen-like domain occupies 42–99; that stretch reads GINGFPGKDGRDGTKGEKGEPGQGLRGLQGPPGKLGPPGNPGPSGSPGAKGQKGDPGA. Pro47 is subject to 4-hydroxyproline. Over residues 49-61 the composition is skewed to basic and acidic residues; it reads KDGRDGTKGEKGE. Residues Pro73, Pro79, Pro82, and Pro88 each carry the 4-hydroxyproline modification. Positions 112 to 130 form a coiled coil; it reads RKALQTEMARIKKWVTFSL. A C-type lectin domain is found at 134 to 245; that stretch reads VGKKLFLSNG…CSSSHLAICE (112 aa). 2 disulfide bridges follow: Cys155–Cys244 and Cys222–Cys236.

As to quaternary structure, oligomeric complex of 3 or more homotrimers. Interacts with MASP1 and MASP2. Interacts with MEP1A and MEP1B and may inhibit their catalytic activity. Post-translationally, hydroxylation on proline residues within the sequence motif, GXPG, is most likely to be 4-hydroxy as this fits the requirement for 4-hydroxylation in vertebrates.

The protein localises to the secreted. Calcium-dependent lectin involved in innate immune defense. Binds mannose, fucose and N-acetylglucosamine on different microorganisms and activates the lectin complement pathway. Binds to late apoptotic cells, as well as to apoptotic blebs and to necrotic cells, but not to early apoptotic cells, facilitating their uptake by macrophages. In Saguinus oedipus (Cotton-top tamarin), this protein is Mannose-binding protein C (MBL2).